A 109-amino-acid chain; its full sequence is Serine protease inhibitor (109 aa).

The N-terminal stretch at 1-28 is a signal peptide; sequence MKMKLLQVHFVLLVSSSFLLGYTGMVTA. 5 disulfides stabilise this stretch: C43/C83, C52/C79, C58/C73, C62/C104, and C85/C98. Residues 43–104 form the TIL domain; sequence CRENEIFSQC…QGVCILENSC (62 aa).

This sequence belongs to the serine protease inhibitor-like (TIL domain-containing) family. As to expression, ubiquitously expressed (at protein level), including in venom glands. Found more precisely in the epidermis, fat body, gut, muscle, and venom of worker bees.

The protein resides in the secreted. Functionally, dual role peptide that functions as a broad-spectrum antimicrobial peptide and antifibrinolytic toxin. Inhibits trypsin (IC(50)=375 nM), plasmin (IC(50)=2140 nM), and microbial serine proteases (subtilisin A (IC(50)=294 nM) and proteinase K (IC(50)=459 nM)). Exhibits antifibrinolytic activity by binding and inhibiting plasmin. Does not inhibit chymotrypsin, elastase or thrombin. Binds to microbial cell wall carbohydrates (LPS, mannan and N-acetyl-D-glucosamine) and shows antimicrobial activity (MIC=4.1 uM against B.thuringiensis, MIC=4.95 uM against E.coli, MIC=9.6 uM against the fungus B.bassiana). Does not show hemolytic activity. The protein is Serine protease inhibitor of Bombus ignitus (Bumblebee).